Consider the following 351-residue polypeptide: Peroxisomal membrane protein PEX14 (351 aa).

The segment at Lys54–Pro75 is disordered. Residues Val60 to Val70 are compositionally biased toward low complexity. The short motif at Ala83–Trp91 is the SH3-binding element. The interval Ala243–Ala351 is disordered. A compositionally biased stretch (polar residues) spans Gln245–Ser258. A compositionally biased stretch (basic and acidic residues) spans Val283–Asn293. The segment covering Ser294–Arg303 has biased composition (polar residues). Low complexity predominate over residues Ser320–Gly334.

The protein belongs to the peroxin-14 family. Interacts with PEX13 (via SH3 domain); forming the PEX13-PEX14 docking complex. Interacts with PEX5 (via WxxxF/Y motifs).

The protein resides in the peroxisome membrane. Component of the PEX13-PEX14 docking complex, a translocon channel that specifically mediates the import of peroxisomal cargo proteins bound to PEX5 receptor. The PEX13-PEX14 docking complex forms a large import pore which can be opened to a diameter of about 9 nm. Mechanistically, PEX5 receptor along with cargo proteins associates with the PEX14 subunit of the PEX13-PEX14 docking complex in the cytosol, leading to the insertion of the receptor into the organelle membrane with the concomitant translocation of the cargo into the peroxisome matrix. This is Peroxisomal membrane protein PEX14 from Pichia angusta (Yeast).